The sequence spans 79 residues: Sulfur carrier protein TusA (79 aa).

Residue cysteine 17 is the Cysteine persulfide intermediate of the active site.

The protein belongs to the sulfur carrier protein TusA family.

The protein resides in the cytoplasm. Sulfur carrier protein which probably makes part of a sulfur-relay system. This is Sulfur carrier protein TusA from Haemophilus ducreyi (strain 35000HP / ATCC 700724).